A 743-amino-acid chain; its full sequence is TSL-kinase interacting protein 1 (743 aa).

One can recognise an SANT domain in the interval 53–104 (RQWAAWTHQEEESFFTALRQVGKNFEKITSRVQSKNKDQVRHYYYRLVRRMN). 2 disordered regions span residues 486 to 523 (SGVH…PGEW) and 626 to 679 (SPKG…TPCG). Basic and acidic residues predominate over residues 488-499 (VHDRPARSRDDY).

As to quaternary structure, interacts only with active kinase forms of TOUSLED. Interacts with SNL1. Post-translationally, phosphorylated in vitro by TOUSLED. As to expression, expressed in flowers, roots and leaves.

Its subcellular location is the nucleus. The protein is TSL-kinase interacting protein 1 (TKI1) of Arabidopsis thaliana (Mouse-ear cress).